Reading from the N-terminus, the 373-residue chain is tRNA-specific 2-thiouridylase MnmA (373 aa).

Residues 12-19 and methionine 38 contribute to the ATP site; that span reads GMSGGVDS. The interval 98 to 100 is interaction with target base in tRNA; it reads NPD. Cysteine 103 serves as the catalytic Nucleophile. A disulfide bond links cysteine 103 and cysteine 200. Glycine 127 is an ATP binding site. Residues 150–152 are interaction with tRNA; sequence KDQ. Cysteine 200 functions as the Cysteine persulfide intermediate in the catalytic mechanism. Positions 312-313 are interaction with tRNA; sequence RY.

The protein belongs to the MnmA/TRMU family.

It is found in the cytoplasm. The catalysed reaction is S-sulfanyl-L-cysteinyl-[protein] + uridine(34) in tRNA + AH2 + ATP = 2-thiouridine(34) in tRNA + L-cysteinyl-[protein] + A + AMP + diphosphate + H(+). Catalyzes the 2-thiolation of uridine at the wobble position (U34) of tRNA, leading to the formation of s(2)U34. This is tRNA-specific 2-thiouridylase MnmA from Streptococcus agalactiae serotype III (strain NEM316).